We begin with the raw amino-acid sequence, 425 residues long: NAC transcription factor ONAC010 (425 aa).

A compositionally biased stretch (polar residues) spans 1 to 10; the sequence is MESPDSSSGS. Residues 1 to 34 are disordered; the sequence is MESPDSSSGSAPPRVLRRQQQQPGSAPELPPGFR. Over residues 12 to 23 the composition is skewed to low complexity; that stretch reads PPRVLRRQQQQP. Residues 29-200 form the NAC domain; it reads LPPGFRFHPT…DWVLCRIYKK (172 aa). A DNA-binding region spans residues 129–206; sequence VGVKKALVFY…IYKKTNKAGA (78 aa).

The protein localises to the nucleus. Functionally, transcription factor of the NAC family associated with male fertility. The chain is NAC transcription factor ONAC010 (ONAC010) from Oryza sativa subsp. indica (Rice).